We begin with the raw amino-acid sequence, 189 residues long: UPF0312 protein VIBHAR_05924 (189 aa).

The signal sequence occupies residues 1 to 22 (MKKSLFATGLAIAIALPFGANA).

This sequence belongs to the UPF0312 family. Type 1 subfamily.

It is found in the periplasm. The sequence is that of UPF0312 protein VIBHAR_05924 from Vibrio campbellii (strain ATCC BAA-1116).